A 283-amino-acid polypeptide reads, in one-letter code: Glutamate racemase (283 aa).

Residues 13-14 (DS) and 45-46 (YG) contribute to the substrate site. The Proton donor/acceptor role is filled by C76. Position 77–78 (77–78 (NT)) interacts with substrate. Residue C186 is the Proton donor/acceptor of the active site. Position 187-188 (187-188 (TH)) interacts with substrate.

This sequence belongs to the aspartate/glutamate racemases family.

The enzyme catalyses L-glutamate = D-glutamate. The protein operates within cell wall biogenesis; peptidoglycan biosynthesis. Functionally, provides the (R)-glutamate required for cell wall biosynthesis. This chain is Glutamate racemase, found in Microcystis aeruginosa (strain NIES-843 / IAM M-2473).